The following is a 90-amino-acid chain: NELL2-interacting cell ontogeny regulator 1 (90 aa).

A signal peptide spans 1–26; sequence MVSSGYLQAVMLLLAVQLLCFRPSDA.

The protein belongs to the NICOL family.

It localises to the secreted. Its function is as follows. mRNA-binding protein which interacts with a range of target mRNAs and may promote extracellular matrix production. The polypeptide is NELL2-interacting cell ontogeny regulator 1 (Salmo salar (Atlantic salmon)).